A 392-amino-acid chain; its full sequence is uncharacterized protein (392 aa).

The first 23 residues, 1–23 (MWTALVLVWISSVLLPRSHMMSA), serve as a signal peptide directing secretion. Residues 24–342 (EPRNIVTNKW…DALTPSLVNK (319 aa)) are Extracellular-facing. Asn77 is a glycosylation site (N-linked (GlcNAc...) asparagine). Disordered stretches follow at residues 83-154 (AEVT…PRTA) and 167-320 (AAGT…TDSC). Over residues 86–97 (TTHGTNTSTPTT) the composition is skewed to low complexity. Polar residues-rich tracts occupy residues 107–127 (SRTLAVPTSSGPSSAEQTRPT) and 170–249 (TVNT…SAST). Asn172 is a glycosylation site (N-linked (GlcNAc...) asparagine). Composition is skewed to low complexity over residues 265-277 (SPTTQPSPTLPTQ) and 284-309 (TLLTTEQVGTKTTSGTASAGPTSRSS). Residues 343 to 363 (MLLLVVLLVGVTLFIAVLVMF) form a helical membrane-spanning segment. Residues 364–392 (ALQAYESYKKKDYTQVDYLINGMYADSEM) are Cytoplasmic-facing.

Its subcellular location is the cell membrane. The protein localises to the golgi apparatus. It is found in the trans-Golgi network membrane. This is an uncharacterized protein from Mus musculus (Mouse).